A 446-amino-acid polypeptide reads, in one-letter code: Signal recognition particle 54 kDa protein (446 aa).

GTP contacts are provided by residues 104-111, 184-188, and 242-245; these read GLQGSGKT, DTAGR, and TKMD.

This sequence belongs to the GTP-binding SRP family. SRP54 subfamily. As to quaternary structure, part of the signal recognition particle protein translocation system, which is composed of SRP and FtsY. Archaeal SRP consists of a 7S RNA molecule of 300 nucleotides and two protein subunits: SRP54 and SRP19.

The protein localises to the cytoplasm. It carries out the reaction GTP + H2O = GDP + phosphate + H(+). Functionally, involved in targeting and insertion of nascent membrane proteins into the cytoplasmic membrane. Binds to the hydrophobic signal sequence of the ribosome-nascent chain (RNC) as it emerges from the ribosomes. The SRP-RNC complex is then targeted to the cytoplasmic membrane where it interacts with the SRP receptor FtsY. This is Signal recognition particle 54 kDa protein from Methanocorpusculum labreanum (strain ATCC 43576 / DSM 4855 / Z).